The following is a 180-amino-acid chain: ATP-dependent protease subunit HslV (180 aa).

Thr-6 is an active-site residue. Ala-164, Cys-167, and Thr-170 together coordinate Na(+).

The protein belongs to the peptidase T1B family. HslV subfamily. In terms of assembly, a double ring-shaped homohexamer of HslV is capped on each side by a ring-shaped HslU homohexamer. The assembly of the HslU/HslV complex is dependent on binding of ATP.

Its subcellular location is the cytoplasm. It carries out the reaction ATP-dependent cleavage of peptide bonds with broad specificity.. With respect to regulation, allosterically activated by HslU binding. In terms of biological role, protease subunit of a proteasome-like degradation complex believed to be a general protein degrading machinery. The sequence is that of ATP-dependent protease subunit HslV from Borrelia recurrentis (strain A1).